The following is a 334-amino-acid chain: Nucleoid-associated protein YPTS_1390 (334 aa).

The protein belongs to the YejK family.

It localises to the cytoplasm. It is found in the nucleoid. In Yersinia pseudotuberculosis serotype IB (strain PB1/+), this protein is Nucleoid-associated protein YPTS_1390.